Reading from the N-terminus, the 108-residue chain is Phosphoribosyl-ATP pyrophosphatase (108 aa).

The protein belongs to the PRA-PH family.

It is found in the cytoplasm. The enzyme catalyses 1-(5-phospho-beta-D-ribosyl)-ATP + H2O = 1-(5-phospho-beta-D-ribosyl)-5'-AMP + diphosphate + H(+). The protein operates within amino-acid biosynthesis; L-histidine biosynthesis; L-histidine from 5-phospho-alpha-D-ribose 1-diphosphate: step 2/9. The protein is Phosphoribosyl-ATP pyrophosphatase of Pelobacter propionicus (strain DSM 2379 / NBRC 103807 / OttBd1).